Reading from the N-terminus, the 169-residue chain is Small ribosomal subunit protein uS5 (169 aa).

Residues M14–V77 enclose the S5 DRBM domain.

The protein belongs to the universal ribosomal protein uS5 family. In terms of assembly, part of the 30S ribosomal subunit. Contacts proteins S4 and S8.

With S4 and S12 plays an important role in translational accuracy. In terms of biological role, located at the back of the 30S subunit body where it stabilizes the conformation of the head with respect to the body. This chain is Small ribosomal subunit protein uS5, found in Alkaliphilus metalliredigens (strain QYMF).